Reading from the N-terminus, the 160-residue chain is Transcription antitermination protein NusB (160 aa).

Belongs to the NusB family.

Functionally, involved in transcription antitermination. Required for transcription of ribosomal RNA (rRNA) genes. Binds specifically to the boxA antiterminator sequence of the ribosomal RNA (rrn) operons. This is Transcription antitermination protein NusB from Allorhizobium ampelinum (strain ATCC BAA-846 / DSM 112012 / S4) (Agrobacterium vitis (strain S4)).